Here is an 835-residue protein sequence, read N- to C-terminus: Leucine--tRNA ligase (835 aa).

A 'HIGH' region motif is present at residues 41-52 (PYPSGQGLHVGH). The 'KMSKS' region signature appears at 611–615 (KMSKS). Lys614 contacts ATP.

It belongs to the class-I aminoacyl-tRNA synthetase family.

It is found in the cytoplasm. The catalysed reaction is tRNA(Leu) + L-leucine + ATP = L-leucyl-tRNA(Leu) + AMP + diphosphate. This is Leucine--tRNA ligase from Elusimicrobium minutum (strain Pei191).